We begin with the raw amino-acid sequence, 37 residues long: Potassium channel toxin alpha-KTx 1.13 (37 aa).

A Pyrrolidone carboxylic acid modification is found at Q1. Disulfide bonds link C7/C28, C13/C33, and C17/C35. Residues 26-33 (GKCMNKKC) form an interaction with Ca(2+)-activated K(+) channels region.

It belongs to the short scorpion toxin superfamily. Potassium channel inhibitor family. Alpha-KTx 01 subfamily. Expressed by the venom gland.

It localises to the secreted. Functionally, potent selective inhibitor of high conductance (maxi-K), different medium and small conductance calcium-activated potassium channels (KCa1.1/KCNMA1 and others), as well as a voltage-dependent potassium channel (Kv1.3/KCNA3&gt;Kv1.2/KCNA2&gt;Kv1.6/KCNA3&gt;&gt;Shaker/Sh). It blocks channel activity by a simple bimolecular inhibition process. Has a pH-specific antimicrobial activity against bacteria (B.subtilis, E.coli and S.aureus) and the fungus C.albicans. This chain is Potassium channel toxin alpha-KTx 1.13, found in Leiurus hebraeus (Hebrew deathstalker scorpion).